We begin with the raw amino-acid sequence, 665 residues long: MDKKKFKEEIEKLREEIEYHNYRYYVLADPVISDEEYDKLLKKLIELEKKYPEFYSPTSPTQKVGGKVLDGFKKVMHSIPMLSLDNTYNEEEIKEFDERIKKLLGVNEVEYVCELKIDGISVALRYENGQFVTALSRGDGIEGEDISENVKKIKSIPLRLFKNLTIEVRGEIFMPVKEFEKYNKIAEEEGLQPFANPRNATAGTIRQLDSSIVAKRNLDSFIYYVVNPEIYGLKTQWEALKFLKEIGFKTNPYSRLCHDVNCVIDFWKEMTKKRTQLDYWIDGLVIKVNNFEYQRKLGETAKAPRWAIAFKFPSIKAESKILNIELNVGRTGVITPVAVLEPINLEGSIVKRASLHNFDYIKEKDIRIGDHVYVEKAGGIIPQIVSVIKEKRTGKELEIEIPKSCPICGGKVGKISEEEVAIRCLNPHCPQKLKRHMEIFVSKSAFNISGLGEKIVEKIVDARLINDVADIFYLTPFDLAQISGLGQKSIANILEQIEKAKNTPLYRVIIGLGIPLVGEKTAKILADKFKSIKALSQASYDELTSIEGIGPEVAKNIIEYFKNEKTKEIIRKLENAGVKLEQEEDTKKSSKLAGLTFVITGKFNSFTREEVKEIIEKLGGKVTNTVSSKTDYLLVGEKPGSKYQKALELGVKIINEDEFKKMIID.

NAD(+)-binding positions include 34 to 38 (DEEYD), 83 to 84 (SL), and glutamate 114. Catalysis depends on lysine 116, which acts as the N6-AMP-lysine intermediate. NAD(+)-binding residues include arginine 137, glutamate 171, lysine 287, and lysine 311. Zn(2+) contacts are provided by cysteine 405, cysteine 408, cysteine 424, and cysteine 429. In terms of domain architecture, BRCT spans 587–665 (KKSSKLAGLT…EDEFKKMIID (79 aa)).

This sequence belongs to the NAD-dependent DNA ligase family. LigA subfamily. Requires Mg(2+) as cofactor. It depends on Mn(2+) as a cofactor.

It carries out the reaction NAD(+) + (deoxyribonucleotide)n-3'-hydroxyl + 5'-phospho-(deoxyribonucleotide)m = (deoxyribonucleotide)n+m + AMP + beta-nicotinamide D-nucleotide.. In terms of biological role, DNA ligase that catalyzes the formation of phosphodiester linkages between 5'-phosphoryl and 3'-hydroxyl groups in double-stranded DNA using NAD as a coenzyme and as the energy source for the reaction. It is essential for DNA replication and repair of damaged DNA. The sequence is that of DNA ligase from Thermosipho africanus (strain TCF52B).